We begin with the raw amino-acid sequence, 156 residues long: Ribosomal RNA large subunit methyltransferase H (156 aa).

S-adenosyl-L-methionine-binding positions include leucine 73, glycine 104, and 123 to 128; that span reads VSSLTL.

The protein belongs to the RNA methyltransferase RlmH family. Homodimer.

It is found in the cytoplasm. The catalysed reaction is pseudouridine(1915) in 23S rRNA + S-adenosyl-L-methionine = N(3)-methylpseudouridine(1915) in 23S rRNA + S-adenosyl-L-homocysteine + H(+). In terms of biological role, specifically methylates the pseudouridine at position 1915 (m3Psi1915) in 23S rRNA. The sequence is that of Ribosomal RNA large subunit methyltransferase H from Paraburkholderia xenovorans (strain LB400).